We begin with the raw amino-acid sequence, 502 residues long: MFRQAKWDEPLIFELSRPGRVGYTLPKPIEDIKVDIPEKLRRKSKLELPELSEPEIVKHYTRLSEMNYGVDSGIYPLGSCTMKYNPKINEEIATHPKVAYIHPYQDERTVQGALAIMWELEQWLKEITGMDRFTLQPAAGANGEFTGVMIIRAYHLDNGEPQRNEMLVPDSAHGTNPASAAMAGFKVIEIPSNENGTIDLEALENAVSERTAGLMLTNPNTLGIFEDEIVEIAKIIHKAGGLLYYDGANLNGILGKIRPGDMGFDIVHLNLHKTFSTPHGGGGPGAGPVGVKEFLKDYLPVPLVSYDEKSGRYYLDYNVPKSIGKVKELYGNFAVLVRALTYLKIMGRDGLREVSEIAVLNANYLTQKLKGTRGYSLPGKELRKHEVVFSAEPMKKETGVKALDVAKRLLDFGMHAPTIYFPLIVHEALMIEPTETVSKEELDAYVEALKRISEEAYTNPEIVKSAPHNTAVKRVDDVLAAKKPIVTWRMYKELKEKGEVDY.

K273 carries the N6-(pyridoxal phosphate)lysine modification.

It belongs to the GcvP family. C-terminal subunit subfamily. The glycine cleavage system is composed of four proteins: P, T, L and H. In this organism, the P 'protein' is a heterodimer of two subunits. It depends on pyridoxal 5'-phosphate as a cofactor.

The catalysed reaction is N(6)-[(R)-lipoyl]-L-lysyl-[glycine-cleavage complex H protein] + glycine + H(+) = N(6)-[(R)-S(8)-aminomethyldihydrolipoyl]-L-lysyl-[glycine-cleavage complex H protein] + CO2. Functionally, the glycine cleavage system catalyzes the degradation of glycine. The P protein binds the alpha-amino group of glycine through its pyridoxal phosphate cofactor; CO(2) is released and the remaining methylamine moiety is then transferred to the lipoamide cofactor of the H protein. The sequence is that of Probable glycine dehydrogenase (decarboxylating) subunit 2 from Pyrococcus furiosus (strain ATCC 43587 / DSM 3638 / JCM 8422 / Vc1).